Consider the following 174-residue polypeptide: Bifunctional protein PyrR (174 aa).

Substrate contacts are provided by residues 38-39 (SG), 95-103 (DDVLATGRT), and Arg-128. A PRPP-binding motif is present at residues 91–103 (ILLVDDVLATGRT).

The protein belongs to the purine/pyrimidine phosphoribosyltransferase family. PyrR subfamily.

It carries out the reaction UMP + diphosphate = 5-phospho-alpha-D-ribose 1-diphosphate + uracil. Its function is as follows. Regulates the transcription of the pyrimidine nucleotide (pyr) operon in response to exogenous pyrimidines. Also displays a weak uracil phosphoribosyltransferase activity which is not physiologically significant. This chain is Bifunctional protein PyrR, found in Ralstonia nicotianae (strain ATCC BAA-1114 / GMI1000) (Ralstonia solanacearum).